The sequence spans 204 residues: Large ribosomal subunit protein eL15 (204 aa).

Positions 185–204 (GGSRRAAWKRKNREHMHRKR) are disordered. The segment covering 190 to 204 (AAWKRKNREHMHRKR) has biased composition (basic residues).

The protein belongs to the eukaryotic ribosomal protein eL15 family.

This is Large ribosomal subunit protein eL15 (RpL15) from Drosophila melanogaster (Fruit fly).